Here is a 651-residue protein sequence, read N- to C-terminus: Acetyl-coenzyme A synthetase (651 aa).

Residues Arg-189–Lys-192, Thr-311, and Asn-335 contribute to the CoA site. ATP is bound by residues Gly-387–Pro-389, Asp-411–Thr-416, Asp-500, and Arg-515. Ser-523 lines the CoA pocket. Position 526 (Arg-526) interacts with ATP. 3 residues coordinate Mg(2+): Val-537, His-539, and Val-542. CoA is bound at residue Arg-584. An N6-acetyllysine modification is found at Lys-609.

Belongs to the ATP-dependent AMP-binding enzyme family. Mg(2+) is required as a cofactor. Post-translationally, acetylated. Deacetylation by the SIR2-homolog deacetylase activates the enzyme.

The catalysed reaction is acetate + ATP + CoA = acetyl-CoA + AMP + diphosphate. In terms of biological role, catalyzes the conversion of acetate into acetyl-CoA (AcCoA), an essential intermediate at the junction of anabolic and catabolic pathways. AcsA undergoes a two-step reaction. In the first half reaction, AcsA combines acetate with ATP to form acetyl-adenylate (AcAMP) intermediate. In the second half reaction, it can then transfer the acetyl group from AcAMP to the sulfhydryl group of CoA, forming the product AcCoA. In Rhizobium leguminosarum bv. trifolii (strain WSM2304), this protein is Acetyl-coenzyme A synthetase.